The primary structure comprises 478 residues: Proline--tRNA ligase (478 aa).

This sequence belongs to the class-II aminoacyl-tRNA synthetase family. ProS type 3 subfamily. In terms of assembly, homodimer.

The protein localises to the cytoplasm. It catalyses the reaction tRNA(Pro) + L-proline + ATP = L-prolyl-tRNA(Pro) + AMP + diphosphate. Its function is as follows. Catalyzes the attachment of proline to tRNA(Pro) in a two-step reaction: proline is first activated by ATP to form Pro-AMP and then transferred to the acceptor end of tRNA(Pro). This is Proline--tRNA ligase from Ignicoccus hospitalis (strain KIN4/I / DSM 18386 / JCM 14125).